An 829-amino-acid chain; its full sequence is Probable beta-glucosidase H (829 aa).

The active site involves aspartate 225. A PA14 domain is found at 389-548; the sequence is RMLSNAVIRF…DPEQMVRDAV (160 aa). N-linked (GlcNAc...) asparagine glycans are attached at residues asparagine 416, asparagine 431, asparagine 473, asparagine 602, and asparagine 627.

Belongs to the glycosyl hydrolase 3 family.

Its subcellular location is the secreted. It catalyses the reaction Hydrolysis of terminal, non-reducing beta-D-glucosyl residues with release of beta-D-glucose.. It participates in glycan metabolism; cellulose degradation. Functionally, beta-glucosidases are one of a number of cellulolytic enzymes involved in the degradation of cellulosic biomass. Catalyzes the last step releasing glucose from the inhibitory cellobiose. The sequence is that of Probable beta-glucosidase H (bglH) from Aspergillus clavatus (strain ATCC 1007 / CBS 513.65 / DSM 816 / NCTC 3887 / NRRL 1 / QM 1276 / 107).